Here is a 181-residue protein sequence, read N- to C-terminus: Acireductone dioxygenase 2 (181 aa).

Fe(2+)-binding residues include His-97, His-99, Glu-103, and His-141. Positions 97, 99, 103, and 141 each coordinate Ni(2+).

Belongs to the acireductone dioxygenase (ARD) family. In terms of assembly, monomer. The cofactor is Fe(2+). It depends on Ni(2+) as a cofactor.

It catalyses the reaction 1,2-dihydroxy-5-(methylsulfanyl)pent-1-en-3-one + O2 = 3-(methylsulfanyl)propanoate + CO + formate + 2 H(+). The catalysed reaction is 1,2-dihydroxy-5-(methylsulfanyl)pent-1-en-3-one + O2 = 4-methylsulfanyl-2-oxobutanoate + formate + 2 H(+). The protein operates within amino-acid biosynthesis; L-methionine biosynthesis via salvage pathway; L-methionine from S-methyl-5-thio-alpha-D-ribose 1-phosphate: step 5/6. Its function is as follows. Catalyzes 2 different reactions between oxygen and the acireductone 1,2-dihydroxy-3-keto-5-methylthiopentene (DHK-MTPene) depending upon the metal bound in the active site. Fe-containing acireductone dioxygenase (Fe-ARD) produces formate and 2-keto-4-methylthiobutyrate (KMTB), the alpha-ketoacid precursor of methionine in the methionine recycle pathway. Ni-containing acireductone dioxygenase (Ni-ARD) produces methylthiopropionate, carbon monoxide and formate, and does not lie on the methionine recycle pathway. This is Acireductone dioxygenase 2 from Pectobacterium atrosepticum (strain SCRI 1043 / ATCC BAA-672) (Erwinia carotovora subsp. atroseptica).